Here is a 361-residue protein sequence, read N- to C-terminus: Phosphoserine aminotransferase (361 aa).

Position 42 (arginine 42) interacts with L-glutamate. Residues 76-77 (AT), tryptophan 102, threonine 152, aspartate 172, and glutamine 195 contribute to the pyridoxal 5'-phosphate site. Lysine 196 is subject to N6-(pyridoxal phosphate)lysine. 237-238 (NT) contacts pyridoxal 5'-phosphate.

The protein belongs to the class-V pyridoxal-phosphate-dependent aminotransferase family. SerC subfamily. In terms of assembly, homodimer. Requires pyridoxal 5'-phosphate as cofactor.

It is found in the cytoplasm. It catalyses the reaction O-phospho-L-serine + 2-oxoglutarate = 3-phosphooxypyruvate + L-glutamate. The enzyme catalyses 4-(phosphooxy)-L-threonine + 2-oxoglutarate = (R)-3-hydroxy-2-oxo-4-phosphooxybutanoate + L-glutamate. Its pathway is amino-acid biosynthesis; L-serine biosynthesis; L-serine from 3-phospho-D-glycerate: step 2/3. It functions in the pathway cofactor biosynthesis; pyridoxine 5'-phosphate biosynthesis; pyridoxine 5'-phosphate from D-erythrose 4-phosphate: step 3/5. Catalyzes the reversible conversion of 3-phosphohydroxypyruvate to phosphoserine and of 3-hydroxy-2-oxo-4-phosphonooxybutanoate to phosphohydroxythreonine. The sequence is that of Phosphoserine aminotransferase from Stenotrophomonas maltophilia (strain R551-3).